A 108-amino-acid chain; its full sequence is Tubulin-specific chaperone A (108 aa).

At alanine 2 the chain carries N-acetylalanine.

It belongs to the TBCA family. As to quaternary structure, supercomplex made of cofactors A to E. Cofactors A and D function by capturing and stabilizing tubulin in a quasi-native conformation. Cofactor E binds to the cofactor D-tubulin complex; interaction with cofactor C then causes the release of tubulin polypeptides that are committed to the native state.

It is found in the cytoplasm. Its subcellular location is the cytoskeleton. Functionally, tubulin-folding protein; involved in the early step of the tubulin folding pathway. The sequence is that of Tubulin-specific chaperone A (TBCA) from Gallus gallus (Chicken).